The primary structure comprises 441 residues: Velvet complex subunit B (441 aa).

Residues 1–173 (MSTLGQGDFE…SDQGVRLRLR (173 aa)) form the Velvet domain. Disordered regions lie at residues 200-220 (GYLP…PHHL), 234-295 (RSRS…ETDT), and 341-396 (MPSP…PSYA). Low complexity-rich tracts occupy residues 272–283 (DGASPDSPHPSS) and 361–375 (PAGA…FSPG).

The protein belongs to the velvet family. VelB subfamily. Component of the heterotrimeric velvet complex composed of laeA, veA and velB; VeA acting as a bridging protein between laeA and velB.

It localises to the nucleus. Its subcellular location is the cytoplasm. Component of the velvet transcription factor complex that controls sexual/asexual developmental ratio in response to light, promoting sexual development in the darkness while stimulating asexual sporulation under illumination. The velvet complex acts as a global regulator for secondary metabolite gene expression and is required for the production of chaetoglobosin A. This is Velvet complex subunit B from Chaetomium globosum (strain ATCC 6205 / CBS 148.51 / DSM 1962 / NBRC 6347 / NRRL 1970) (Soil fungus).